Reading from the N-terminus, the 278-residue chain is Shikimate dehydrogenase (NADP(+)) (278 aa).

Residues 18–20 (SRS) and Thr-65 each bind shikimate. The Proton acceptor role is filled by Lys-69. Residue Glu-80 participates in NADP(+) binding. Shikimate contacts are provided by Asn-89 and Asp-104. NADP(+) is bound by residues 129-133 (GAGGS) and Leu-218. Position 220 (Tyr-220) interacts with shikimate. Gly-241 contributes to the NADP(+) binding site.

It belongs to the shikimate dehydrogenase family. In terms of assembly, homodimer.

The catalysed reaction is shikimate + NADP(+) = 3-dehydroshikimate + NADPH + H(+). It functions in the pathway metabolic intermediate biosynthesis; chorismate biosynthesis; chorismate from D-erythrose 4-phosphate and phosphoenolpyruvate: step 4/7. In terms of biological role, involved in the biosynthesis of the chorismate, which leads to the biosynthesis of aromatic amino acids. Catalyzes the reversible NADPH linked reduction of 3-dehydroshikimate (DHSA) to yield shikimate (SA). This chain is Shikimate dehydrogenase (NADP(+)), found in Rhodopseudomonas palustris (strain ATCC BAA-98 / CGA009).